The following is a 317-amino-acid chain: Putative 2-hydroxyacid dehydrogenase SAB2178 (317 aa).

Residues 155 to 156, 234 to 236, and Asp260 each bind NAD(+); these read EI and ASR. The active site involves Arg236. Glu265 is a catalytic residue. His283 serves as the catalytic Proton donor. 283-286 is a binding site for NAD(+); it reads HIGN.

The protein belongs to the D-isomer specific 2-hydroxyacid dehydrogenase family.

In Staphylococcus aureus (strain bovine RF122 / ET3-1), this protein is Putative 2-hydroxyacid dehydrogenase SAB2178.